Consider the following 270-residue polypeptide: Tryptophan synthase alpha chain (270 aa).

Residues Glu60 and Asp71 each act as proton acceptor in the active site.

Belongs to the TrpA family. In terms of assembly, tetramer of two alpha and two beta chains.

It carries out the reaction (1S,2R)-1-C-(indol-3-yl)glycerol 3-phosphate + L-serine = D-glyceraldehyde 3-phosphate + L-tryptophan + H2O. It participates in amino-acid biosynthesis; L-tryptophan biosynthesis; L-tryptophan from chorismate: step 5/5. Functionally, the alpha subunit is responsible for the aldol cleavage of indoleglycerol phosphate to indole and glyceraldehyde 3-phosphate. The sequence is that of Tryptophan synthase alpha chain from Deinococcus radiodurans (strain ATCC 13939 / DSM 20539 / JCM 16871 / CCUG 27074 / LMG 4051 / NBRC 15346 / NCIMB 9279 / VKM B-1422 / R1).